The following is a 489-amino-acid chain: NADH-quinone oxidoreductase subunit N (489 aa).

Transmembrane regions (helical) follow at residues 15-35 (APLL…VFFI), 44-64 (GYLA…LWGV), 78-98 (FALT…TMSL), 106-126 (IEQG…ILLA), 131-151 (LIVL…LTGF), 166-186 (LVLG…IFGA), 209-229 (LTLL…KVAL), 244-264 (PTPV…AALV), 278-298 (WLPV…LGAV), 306-326 (MLAY…MVAG), 333-353 (AFLF…AVLI), 378-398 (LAVA…MAGF), 412-432 (GLPW…FFYL), and 459-479 (IALA…VFAL).

This sequence belongs to the complex I subunit 2 family. NDH-1 is composed of 14 different subunits. Subunits NuoA, H, J, K, L, M, N constitute the membrane sector of the complex.

It is found in the cell membrane. It carries out the reaction a quinone + NADH + 5 H(+)(in) = a quinol + NAD(+) + 4 H(+)(out). NDH-1 shuttles electrons from NADH, via FMN and iron-sulfur (Fe-S) centers, to quinones in the respiratory chain. The immediate electron acceptor for the enzyme in this species is believed to be ubiquinone. Couples the redox reaction to proton translocation (for every two electrons transferred, four hydrogen ions are translocated across the cytoplasmic membrane), and thus conserves the redox energy in a proton gradient. The protein is NADH-quinone oxidoreductase subunit N of Chloroflexus aggregans (strain MD-66 / DSM 9485).